The chain runs to 1009 residues: MKKKNWIYALIVTLIIIIAIVSMIFFVQTKYGDQSEKGSQSVSNKNNKIHIAIVNEDQPTTYNGKKVELGQAFIKRLANEKNYKFETVTRNVAESGLKNGGYQVMIVIPENFSKLAMQLDAKTPSKISLQYKTAVGQKEEVAKNTEKVVSNVLNDFNKNLVEIYLTSIIDNLHNAQKNVGAIMTREHGVNSKFSNYLLNPINDFPELFTDTLVNSISANKDITKWFQTYNKSLLSANSDTFRVNTDYNVSTLIEKQNSLFDEHNTAMDKMLQDYKSQKDSVELDNYINALKQMDSQIDQQSSMQDTGKEEYKQTVKENLDKLREIIQSQESPFSKGMIEDYRKQLTESLQDELANNKDLQDALNSIKMNNAQFAENLEKQLHDDIVKEPDTDTTFIYNMSKQDFIAAGLNEGEANKYEAIVKEAKRYKNEYNLKKPLAEHINLTDYDNQVAQDTSSLINDGVKVQRTETIKSNDINQLTVATDPHFNFEGDIKINGKKYDIKDQSVQLDTSNKEYKVEVNGVAKLKKDAEKDFLKDKTMHLQLLFGQANRQDEPNDKKATSVVDVTLNHNLDGRLSKDALSQQLSALSRFDAHYKMYTDTKGREDKPFDNKRLIDMMVDQVINDMESFKDDKVAVLHQIDSMEENSDKLIDDILNNKKNTTKNKEDISKLIDQLENVKKTFAEEPQEPKIDKGKNDEFNTMSSNLDKEISRISEKSTQLLSDTQESKTIADSVSGQLNQLDNNVNKLHATGRALGVRANDLNRQMAKNDKDNELFAKEFKKVLQNSKDGDRQNQALKAFMSNPVQKKNLENVLANNGNTEVISPTLFVLLMYLLSMITAYIFYSYERAKGQMNFIKDDYSSKNHLWNNVITSGVIGTTGLVEGLIVGLIAMNKFHVLAGYRAKFILMVILTMMVFVLINTYLLRQVKSIGMFLMIAALGLYFVAMNNLKAAGQGVTNKISPLSYIDNMFFNYLNAEHPIGLALVILTVLVIIGFVLNMFIKHFKKERLI.

6 helical membrane passes run Ile7–Val27, Ile822–Phe842, Val869–Ile889, Lys903–Leu923, Ser928–Leu948, and Ile979–Phe999.

Belongs to the EsaA family. Homodimer. Interacts with EssB.

It localises to the cell membrane. In terms of biological role, component of the type VII secretion system (Ess). Provides together with EssB and other components such as EssC and EssE a secretion platform across the cytoplasmic membrane in the host. This chain is Type VII secretion system accessory factor EsaA, found in Staphylococcus aureus (strain Mu50 / ATCC 700699).